The following is a 670-amino-acid chain: Putative segment polarity protein dishevelled homolog DVL1P1 (670 aa).

The region spanning 1–85 (MAETKIIYHM…RVVSWLVLVE (85 aa)) is the DIX domain. A disordered region spans residues 89 to 240 (SDAGSQGTDS…ADRASSFSSM (152 aa)). A compositionally biased stretch (basic residues) spans 142–151 (SHRRDRARRR). The segment covering 152–171 (NREEAARTNGHPRGDRRRDV) has biased composition (basic and acidic residues). 2 stretches are compositionally biased toward low complexity: residues 176–192 (DSAS…SSFV) and 201–214 (SRLS…TSSR). Positions 215–228 (LIRKHKRRRRKQRL) are enriched in basic residues. The region spanning 251-323 (TVTLNMERHH…NDDAVRVLRE (73 aa)) is the PDZ domain. The region spanning 400–474 (PDSGLEIRDR…SEQCYYVFGD (75 aa)) is the DEP domain. A disordered region spans residues 518-642 (PGPPPCFPPA…PGGPPVRELA (125 aa)). Low complexity-rich tracts occupy residues 526–553 (PAYQ…SSGS) and 600–614 (SRGS…SYAP).

It belongs to the DSH family. In terms of tissue distribution, expressed in thymus, heart, liver, kidney, brain, skeletal muscle, and pancreas.

The protein resides in the cytoplasm. Its function is as follows. May play a role in the signal transduction pathway mediated by multiple Wnt genes. This chain is Putative segment polarity protein dishevelled homolog DVL1P1 (DVL1P1), found in Homo sapiens (Human).